The following is a 1186-amino-acid chain: ATP-dependent helicase/deoxyribonuclease subunit B (1186 aa).

Positions 1 to 308 (MSVKFLLGRA…AHLEKEWGKN (308 aa)) constitute a UvrD-like helicase ATP-binding domain. 8–15 (GRAGSGKT) provides a ligand contact to ATP. In terms of domain architecture, UvrD-like helicase C-terminal spans 288-620 (SLPRFKDNPA…LVGTADRSRY (333 aa)). Cysteine 822, cysteine 1144, cysteine 1147, and cysteine 1153 together coordinate [4Fe-4S] cluster.

Belongs to the helicase family. AddB/RexB type 1 subfamily. As to quaternary structure, heterodimer of AddA and AddB. Mg(2+) serves as cofactor. [4Fe-4S] cluster is required as a cofactor.

Functionally, the heterodimer acts as both an ATP-dependent DNA helicase and an ATP-dependent, dual-direction single-stranded exonuclease. Recognizes the chi site generating a DNA molecule suitable for the initiation of homologous recombination. The AddB subunit has 5' -&gt; 3' nuclease activity but not helicase activity. This Natranaerobius thermophilus (strain ATCC BAA-1301 / DSM 18059 / JW/NM-WN-LF) protein is ATP-dependent helicase/deoxyribonuclease subunit B.